We begin with the raw amino-acid sequence, 333 residues long: Torsin-1A (333 aa).

The N-terminal stretch at 1–20 (MKLGRATLALLLLVPCVVRA) is a signal peptide. The interval 92–252 (KPKKPLTLSL…VSVFNNKNSG (161 aa)) is interaction with SNAPIN. N-linked (GlcNAc...) asparagine glycosylation is found at Asn-144 and Asn-159. The segment at 252–333 (GFWHSSLIDR…FTKLDYYLDD (82 aa)) is interaction with KLC1. The interaction with SYNE3 stretch occupies residues 313–333 (KVFSDKGCKTVFTKLDYYLDD).

Belongs to the ClpA/ClpB family. Torsin subfamily. As to quaternary structure, homohexamer. Interacts with TOR1B; the interaction may be specific of neural tissues. Interacts (ATP-bound) with TOR1AIP1 and TOR1AIP2; the interactions induce ATPase activity. Interacts with KLHL14; preferentially when ATP-free. Interacts with KLC1 (via TPR repeats); the interaction associates TOR1A with the kinesin oligomeric complex. Interacts with COPS4; the interaction associates TOR1A with the CSN complex. Interacts with SNAPIN; the interaction is direct and associates SNAPIN with the CSN complex. Interacts with STON2. Interacts (ATP-bound) with SYNE3 (via KASH domain); the interaction is required for SYNE3 nuclear envelope localization. Interacts with VIM; the interaction associates TOR1A with the cytoskeleton. Interacts with PLEC. Interacts (ATP-bound) with SLC6A3; regulates SLC6A3 transport to the plasma membrane. In terms of processing, N-glycosylated. Expressed in brain (at protein level).

It is found in the endoplasmic reticulum lumen. It localises to the nucleus inner membrane. Its subcellular location is the cell projection. The protein localises to the growth cone. The protein resides in the cytoplasmic vesicle membrane. It is found in the cytoplasmic vesicle. It localises to the secretory vesicle. Its subcellular location is the synaptic vesicle. It catalyses the reaction ATP + H2O = ADP + phosphate + H(+). Protein with chaperone functions important for the control of protein folding, processing, stability and localization as well as for the reduction of misfolded protein aggregates. Involved in the regulation of synaptic vesicle recycling, controls STON2 protein stability in collaboration with the COP9 signalosome complex (CSN). In the nucleus, may link the cytoskeleton with the nuclear envelope, this mechanism seems to be crucial for the control of nuclear polarity, cell movement and, specifically in neurons, nuclear envelope integrity. Participates in the cellular trafficking and may regulate the subcellular location of multipass membrane proteins such as the dopamine transporter SLC6A3, leading to the modulation of dopamine neurotransmission. In the endoplasmic reticulum, plays a role in the quality control of protein folding by increasing clearance of misfolded proteins such as SGCE variants or holding them in an intermediate state for proper refolding. May have a redundant function with TOR1B in non-neural tissues. The sequence is that of Torsin-1A (Tor1a) from Rattus norvegicus (Rat).